Consider the following 196-residue polypeptide: DnaA initiator-associating protein DiaA (196 aa).

The SIS domain occupies 34 to 196; it reads LVQSLLNGNK…DNTLFPHQND (163 aa).

The protein belongs to the SIS family. DiaA subfamily. Homotetramer; dimer of dimers.

Its function is as follows. Required for the timely initiation of chromosomal replication via direct interactions with the DnaA initiator protein. This Yersinia pestis bv. Antiqua (strain Antiqua) protein is DnaA initiator-associating protein DiaA.